Reading from the N-terminus, the 425-residue chain is Riboflavin biosynthesis protein RibBA (425 aa).

The interval 1-204 (MTRLDSVERA…IADLIEWRRK (204 aa)) is DHBP synthase. Residues 28 to 29 (RE), Asp-33, 141 to 145 (RPGHT), and Glu-165 each bind D-ribulose 5-phosphate. Glu-29 is a binding site for Mg(2+). His-144 contacts Mg(2+). The interval 205–425 (HEKHIERIAE…HLPGEFGGAL (221 aa)) is GTP cyclohydrolase II. GTP is bound at residue 259 to 263 (RVHSE). Zn(2+)-binding residues include Cys-264, Cys-275, and Cys-277. GTP contacts are provided by residues Gln-280, 303-305 (EGR), and Thr-325. Catalysis depends on Asp-337, which acts as the Proton acceptor; for GTP cyclohydrolase activity. Arg-339 functions as the Nucleophile; for GTP cyclohydrolase activity in the catalytic mechanism. Residues Thr-360 and Lys-365 each coordinate GTP.

The protein in the N-terminal section; belongs to the DHBP synthase family. It in the C-terminal section; belongs to the GTP cyclohydrolase II family. The cofactor is Mg(2+). Mn(2+) is required as a cofactor. It depends on Zn(2+) as a cofactor.

The catalysed reaction is D-ribulose 5-phosphate = (2S)-2-hydroxy-3-oxobutyl phosphate + formate + H(+). The enzyme catalyses GTP + 4 H2O = 2,5-diamino-6-hydroxy-4-(5-phosphoribosylamino)-pyrimidine + formate + 2 phosphate + 3 H(+). Its pathway is cofactor biosynthesis; riboflavin biosynthesis; 2-hydroxy-3-oxobutyl phosphate from D-ribulose 5-phosphate: step 1/1. The protein operates within cofactor biosynthesis; riboflavin biosynthesis; 5-amino-6-(D-ribitylamino)uracil from GTP: step 1/4. Catalyzes the conversion of D-ribulose 5-phosphate to formate and 3,4-dihydroxy-2-butanone 4-phosphate. Functionally, catalyzes the conversion of GTP to 2,5-diamino-6-ribosylamino-4(3H)-pyrimidinone 5'-phosphate (DARP), formate and pyrophosphate. In Mycolicibacterium paratuberculosis (strain ATCC BAA-968 / K-10) (Mycobacterium paratuberculosis), this protein is Riboflavin biosynthesis protein RibBA.